We begin with the raw amino-acid sequence, 309 residues long: Probable lipid kinase YegS-like (309 aa).

The DAGKc domain occupies 1-133; the sequence is MPLTHIRLLL…IDIIRANNNY (133 aa). Residues Ser39, 65–71, and Thr95 contribute to the ATP site; that span reads GDGSLNE. The Mg(2+) site is built by Leu214, Asp217, and Leu219. Residue Glu273 is the Proton acceptor of the active site.

The protein belongs to the diacylglycerol/lipid kinase family. YegS lipid kinase subfamily. Requires Mg(2+) as cofactor. The cofactor is Ca(2+).

The protein localises to the cytoplasm. Its function is as follows. Probably phosphorylates lipids; the in vivo substrate is unknown. This Shewanella frigidimarina (strain NCIMB 400) protein is Probable lipid kinase YegS-like.